We begin with the raw amino-acid sequence, 481 residues long: Protein nucleotidyltransferase YdiU (481 aa).

ATP contacts are provided by G85, G87, R88, K108, D120, G121, R172, and R179. D248 acts as the Proton acceptor in catalysis. Residues N249 and D258 each coordinate Mg(2+). D258 serves as a coordination point for ATP.

Belongs to the SELO family. It depends on Mg(2+) as a cofactor. Requires Mn(2+) as cofactor.

It catalyses the reaction L-seryl-[protein] + ATP = 3-O-(5'-adenylyl)-L-seryl-[protein] + diphosphate. It carries out the reaction L-threonyl-[protein] + ATP = 3-O-(5'-adenylyl)-L-threonyl-[protein] + diphosphate. The catalysed reaction is L-tyrosyl-[protein] + ATP = O-(5'-adenylyl)-L-tyrosyl-[protein] + diphosphate. The enzyme catalyses L-histidyl-[protein] + UTP = N(tele)-(5'-uridylyl)-L-histidyl-[protein] + diphosphate. It catalyses the reaction L-seryl-[protein] + UTP = O-(5'-uridylyl)-L-seryl-[protein] + diphosphate. It carries out the reaction L-tyrosyl-[protein] + UTP = O-(5'-uridylyl)-L-tyrosyl-[protein] + diphosphate. Its function is as follows. Nucleotidyltransferase involved in the post-translational modification of proteins. It can catalyze the addition of adenosine monophosphate (AMP) or uridine monophosphate (UMP) to a protein, resulting in modifications known as AMPylation and UMPylation. The sequence is that of Protein nucleotidyltransferase YdiU from Cereibacter sphaeroides (strain ATCC 17029 / ATH 2.4.9) (Rhodobacter sphaeroides).